A 274-amino-acid polypeptide reads, in one-letter code: NADPH-dependent 7-cyano-7-deazaguanine reductase (274 aa).

Position 80-82 (80-82 (VES)) interacts with substrate. 82–83 (SK) provides a ligand contact to NADPH. Cys-181 (thioimide intermediate) is an active-site residue. Asp-188 serves as the catalytic Proton donor. Position 220–221 (220–221 (HE)) interacts with substrate. 249–250 (RG) provides a ligand contact to NADPH.

The protein belongs to the GTP cyclohydrolase I family. QueF type 2 subfamily. As to quaternary structure, homodimer.

The protein localises to the cytoplasm. It catalyses the reaction 7-aminomethyl-7-carbaguanine + 2 NADP(+) = 7-cyano-7-deazaguanine + 2 NADPH + 3 H(+). Its pathway is tRNA modification; tRNA-queuosine biosynthesis. Functionally, catalyzes the NADPH-dependent reduction of 7-cyano-7-deazaguanine (preQ0) to 7-aminomethyl-7-deazaguanine (preQ1). The sequence is that of NADPH-dependent 7-cyano-7-deazaguanine reductase from Burkholderia ambifaria (strain MC40-6).